A 182-amino-acid polypeptide reads, in one-letter code: UPF0215 protein Pcal_0119 (182 aa).

It belongs to the UPF0215 family.

This Pyrobaculum calidifontis (strain DSM 21063 / JCM 11548 / VA1) protein is UPF0215 protein Pcal_0119.